The chain runs to 140 residues: MHRKVRPASLMIRKMACSGVEPQILVQYLVLRKDLSQAPFSWPTGALVAQACHAATAALHLHRDHPHTAAYLRELGRMRKVVLEAADETTLKELAETLQQKNIDHTLWLEQPENIATCIALRPYPKEEVSQYLKKFRLFK.

This sequence belongs to the PTH2 family. PTRHD1 subfamily.

It carries out the reaction an N-acyl-L-alpha-aminoacyl-tRNA + H2O = an N-acyl-L-amino acid + a tRNA + H(+). As a putative peptidyl-tRNA hydrolase, it might be involved in releasing tRNAs from the ribosome during protein synthesis. Some evidence, however, suggests that it lacks peptidyl-tRNA hydrolase activity. This is Putative peptidyl-tRNA hydrolase PTRHD1 (Ptrhd1) from Mus musculus (Mouse).